We begin with the raw amino-acid sequence, 156 residues long: uncharacterized protein (156 aa).

This sequence belongs to the mimivirus L223/L227/L812 family.

This is an uncharacterized protein from Acanthamoeba polyphaga mimivirus (APMV).